Reading from the N-terminus, the 539-residue chain is Phosphoenolpyruvate carboxykinase (ATP) (539 aa).

Substrate-binding residues include R61, Y195, and K201. ATP-binding positions include K201, H220, and 238–246 (GLSGTGKTT). Mn(2+) contacts are provided by K201 and H220. D259 lines the Mn(2+) pocket. 3 residues coordinate ATP: E287, R325, and T450. Substrate is bound at residue R325.

The protein belongs to the phosphoenolpyruvate carboxykinase (ATP) family. Mn(2+) is required as a cofactor.

The protein localises to the cytoplasm. The catalysed reaction is oxaloacetate + ATP = phosphoenolpyruvate + ADP + CO2. It participates in carbohydrate biosynthesis; gluconeogenesis. Involved in the gluconeogenesis. Catalyzes the conversion of oxaloacetate (OAA) to phosphoenolpyruvate (PEP) through direct phosphoryl transfer between the nucleoside triphosphate and OAA. The sequence is that of Phosphoenolpyruvate carboxykinase (ATP) from Methylorubrum extorquens (strain CM4 / NCIMB 13688) (Methylobacterium extorquens).